Consider the following 98-residue polypeptide: NADH-ubiquinone oxidoreductase chain 4L (98 aa).

3 consecutive transmembrane segments (helical) span residues 1–21, 29–49, and 61–81; these read MIPT…GMLI, SLLC…LIAL, and IILL…LVSI.

The protein belongs to the complex I subunit 4L family. As to quaternary structure, core subunit of respiratory chain NADH dehydrogenase (Complex I) which is composed of 45 different subunits.

It localises to the mitochondrion inner membrane. The catalysed reaction is a ubiquinone + NADH + 5 H(+)(in) = a ubiquinol + NAD(+) + 4 H(+)(out). In terms of biological role, core subunit of the mitochondrial membrane respiratory chain NADH dehydrogenase (Complex I) which catalyzes electron transfer from NADH through the respiratory chain, using ubiquinone as an electron acceptor. Part of the enzyme membrane arm which is embedded in the lipid bilayer and involved in proton translocation. This is NADH-ubiquinone oxidoreductase chain 4L (MT-ND4L) from Macaca ochreata (Booted macaque).